The following is a 308-amino-acid chain: 3'(2'),5'-bisphosphate nucleotidase 1 (308 aa).

Ala-2 carries the N-acetylalanine modification. The active-site Proton acceptor is the Asp-51. Mg(2+)-binding residues include Glu-74, Asp-117, Leu-119, and Asp-120. Thr-122 acts as the Proton acceptor in catalysis. Phosphothreonine is present on Thr-122. Residues Thr-195, His-198, Gly-220, and Lys-224 each coordinate AMP. Ser-240 is subject to Phosphoserine. At Lys-244 the chain carries N6-succinyllysine. Residue Asp-247 participates in Mg(2+) binding.

Belongs to the inositol monophosphatase superfamily. Requires Mg(2+) as cofactor. Highly expressed in kidney, liver, pancreas and heart. Detected at lower levels in brain, placenta, lung and skeletal muscle.

It catalyses the reaction adenosine 3',5'-bisphosphate + H2O = AMP + phosphate. It carries out the reaction adenosine 2',5'-bisphosphate + H2O = AMP + phosphate. The catalysed reaction is 3'-phosphoadenylyl sulfate + H2O = adenosine 5'-phosphosulfate + phosphate. The enzyme catalyses 1D-myo-inositol 1,4-bisphosphate + H2O = 1D-myo-inositol 4-phosphate + phosphate. It catalyses the reaction 1D-myo-inositol 1,3,4-trisphosphate + H2O = 1D-myo-inositol 3,4-bisphosphate + phosphate. Is very sensitive to inhibition by Li(+) (IC(50)=0.3 mM for hydrolysis of PAP; IC(50)=0.6 mM for hydrolysis of inositol-1,4-bis-phosphate). Is not affected by high Na(+) concentrations. In terms of biological role, phosphatase that converts 3'(2')-phosphoadenosine 5'-phosphate (PAP) to AMP and inositol 1,4-bisphosphate (Ins(1,4)P2) to inositol 4-phosphate. Is also able to hydrolyze adenosine 3'-phosphate 5'-phosphosulfate (PAPS) to adenosine 5'-phosphosulfate (APS). Probably prevents the toxic accumulation of PAP, a compound which inhibits a variety of proteins, including PAPS-utilizing enzymes such as sulfotransferases, and RNA processing enzymes. Could also play a role in inositol recycling and phosphoinositide metabolism. Is not active on 3'-AMP, inositol-1-phosphate and inositol-1,4,5-triphosphate. The polypeptide is 3'(2'),5'-bisphosphate nucleotidase 1 (BPNT1) (Homo sapiens (Human)).